A 547-amino-acid chain; its full sequence is ATP synthase subunit beta, mitochondrial (547 aa).

The N-terminal 45 residues, Met-1–Tyr-45, are a transit peptide targeting the mitochondrion. Residues Lys-52–Thr-62 are compositionally biased toward low complexity. Residues Lys-52–Lys-74 are disordered. Gly-226–Thr-233 contacts ATP.

The protein belongs to the ATPase alpha/beta chains family. As to quaternary structure, F-type ATPases have 2 components, CF(1) - the catalytic core - and CF(0) - the membrane proton channel. CF(1) has five subunits: alpha(3), beta(3), gamma(1), delta(1), epsilon(1). CF(0) has three main subunits: a, b and c.

It is found in the mitochondrion. It localises to the mitochondrion inner membrane. It catalyses the reaction ATP + H2O + 4 H(+)(in) = ADP + phosphate + 5 H(+)(out). Functionally, mitochondrial membrane ATP synthase (F(1)F(0) ATP synthase or Complex V) produces ATP from ADP in the presence of a proton gradient across the membrane which is generated by electron transport complexes of the respiratory chain. F-type ATPases consist of two structural domains, F(1) - containing the extramembraneous catalytic core, and F(0) - containing the membrane proton channel, linked together by a central stalk and a peripheral stalk. During catalysis, ATP synthesis in the catalytic domain of F(1) is coupled via a rotary mechanism of the central stalk subunits to proton translocation. Subunits alpha and beta form the catalytic core in F(1). Rotation of the central stalk against the surrounding alpha(3)beta(3) subunits leads to hydrolysis of ATP in three separate catalytic sites on the beta subunits. In Daucus carota (Wild carrot), this protein is ATP synthase subunit beta, mitochondrial (ATPB).